The chain runs to 784 residues: Kinesin-like protein Klp68D (784 aa).

Residues 19-344 (CVQVVVRCRP…LRYASRAKSI (326 aa)) form the Kinesin motor domain. 106–113 (GQTGTGKT) is a binding site for ATP. Residues 351 to 385 (NEDPQDAKLKEYQEEIERLKRLIGPQQQQRSEKQV) are a coiled coil. 3 disordered regions span residues 371–449 (RLIG…ERER), 605–652 (KFSS…PSSL), and 742–784 (IKSS…LVNK). Residues 386–396 (TAKKQRVKKPK) are compositionally biased toward basic residues. A compositionally biased stretch (acidic residues) spans 416–428 (PVEDDSDPEGAES). Residues 426 to 582 (AESESDKENE…KRQLLIIDNF (157 aa)) adopt a coiled-coil conformation. A compositionally biased stretch (basic and acidic residues) spans 429–449 (ESDKENEAEVAKSNEELERER). A compositionally biased stretch (basic residues) spans 622–634 (SSKRPVSHPQRRR). Positions 769-778 (KKPASAYPKA) are enriched in low complexity.

The protein belongs to the TRAFAC class myosin-kinesin ATPase superfamily. Kinesin family. Kinesin II subfamily. Expressed primarily in the central nervous system and in a subset of the peripheral nervous system during embryogenesis.

It is found in the cytoplasm. The protein resides in the cytoskeleton. Its function is as follows. Plus-end directed microtubule motor that may be used for anterograde axonal transport and could conceivably move cargos in fly neurons different than those moved by kinesin heavy chain or other plus-end directed motors. The sequence is that of Kinesin-like protein Klp68D (Klp68D) from Drosophila melanogaster (Fruit fly).